An 81-amino-acid polypeptide reads, in one-letter code: Sulfur carrier protein TusA (81 aa).

Catalysis depends on Cys19, which acts as the Cysteine persulfide intermediate.

It belongs to the sulfur carrier protein TusA family. As to quaternary structure, interacts with IscS.

The protein localises to the cytoplasm. The protein operates within tRNA modification. Functionally, sulfur carrier protein involved in sulfur trafficking in the cell. Part of a sulfur-relay system required for 2-thiolation during synthesis of 2-thiouridine of the modified wobble base 5-methylaminomethyl-2-thiouridine (mnm(5)s(2)U) in tRNA. Interacts with IscS and stimulates its cysteine desulfurase activity. Accepts an activated sulfur from IscS, which is then transferred to TusD, and thus determines the direction of sulfur flow from IscS to 2-thiouridine formation. Also appears to be involved in sulfur transfer for the biosynthesis of molybdopterin. This chain is Sulfur carrier protein TusA, found in Erwinia tasmaniensis (strain DSM 17950 / CFBP 7177 / CIP 109463 / NCPPB 4357 / Et1/99).